A 402-amino-acid chain; its full sequence is Succinyl-CoA--D-citramalate CoA-transferase (402 aa).

Residue aspartate 174 is the Nucleophile of the active site.

It belongs to the CoA-transferase III family. In terms of assembly, homodimer.

The catalysed reaction is (3R)-citramalate + succinyl-CoA = (3R)-citramalyl-CoA + succinate. The enzyme catalyses (R)-malate + succinyl-CoA = (R)-malyl-CoA + succinate. In terms of biological role, involved in the 3-hydroxypropionate cycle used for autotrophic carbon dioxide fixation, and in the glyoxylate assimilation cycle used to regenerate acetyl-CoA and produce pyruvate as universal precursor for biosynthesis. Catalyzes the transfer of CoA moiety from succinyl-CoA to D-citramalate to yield citramalyl-CoA. This Chloroflexus aurantiacus (strain ATCC 29366 / DSM 635 / J-10-fl) protein is Succinyl-CoA--D-citramalate CoA-transferase.